The sequence spans 425 residues: Serine--tRNA ligase (425 aa).

Position 233-235 (233-235 (TAE)) interacts with L-serine. 264–266 (RAE) is a binding site for ATP. E287 serves as a coordination point for L-serine. 351–354 (EISS) contacts ATP. S387 contributes to the L-serine binding site.

This sequence belongs to the class-II aminoacyl-tRNA synthetase family. Type-1 seryl-tRNA synthetase subfamily. Homodimer. The tRNA molecule binds across the dimer.

The protein localises to the cytoplasm. It carries out the reaction tRNA(Ser) + L-serine + ATP = L-seryl-tRNA(Ser) + AMP + diphosphate + H(+). The catalysed reaction is tRNA(Sec) + L-serine + ATP = L-seryl-tRNA(Sec) + AMP + diphosphate + H(+). It functions in the pathway aminoacyl-tRNA biosynthesis; selenocysteinyl-tRNA(Sec) biosynthesis; L-seryl-tRNA(Sec) from L-serine and tRNA(Sec): step 1/1. Its function is as follows. Catalyzes the attachment of serine to tRNA(Ser). Is also able to aminoacylate tRNA(Sec) with serine, to form the misacylated tRNA L-seryl-tRNA(Sec), which will be further converted into selenocysteinyl-tRNA(Sec). This is Serine--tRNA ligase from Clostridium botulinum (strain Eklund 17B / Type B).